The sequence spans 661 residues: Putative core protein L410 (661 aa).

Residues 1–11 (MADNKGRRDTF) show a composition bias toward basic and acidic residues. The interval 1 to 26 (MADNKGRRDTFDVSGDTNTNATSNKR) is disordered. The segment covering 15–25 (GDTNTNATSNK) has biased composition (polar residues). A coiled-coil region spans residues 112 to 140 (KKENKWSDKEYDEFRKELTNLLTGNRALE).

It localises to the virion. This Acanthamoeba polyphaga (Amoeba) protein is Putative core protein L410.